Reading from the N-terminus, the 154-residue chain is Peptide methionine sulfoxide reductase MsrB (154 aa).

One can recognise a MsrB domain in the interval 28 to 150; sequence DQQWREQLSE…NSVSLIFNKI (123 aa). Zn(2+)-binding residues include Cys-67, Cys-70, Cys-116, and Cys-119. Residue Cys-139 is the Nucleophile of the active site.

Belongs to the MsrB Met sulfoxide reductase family. The cofactor is Zn(2+).

The enzyme catalyses L-methionyl-[protein] + [thioredoxin]-disulfide + H2O = L-methionyl-(R)-S-oxide-[protein] + [thioredoxin]-dithiol. The sequence is that of Peptide methionine sulfoxide reductase MsrB from Vibrio vulnificus (strain YJ016).